We begin with the raw amino-acid sequence, 428 residues long: Sialidase-3 (428 aa).

The short motif at 24-27 is the FRIP motif element; sequence YRIP. Substrate contacts are provided by arginine 25 and arginine 45. Aspartate 50 acts as the Proton acceptor in catalysis. One copy of the BNR 1 repeat lies at 129 to 140; it reads IYSQDAGCSWSE. Residues tyrosine 179 and tyrosine 181 each contribute to the substrate site. The BNR 2 repeat unit spans residues 203–214; it reads IYSDDLGVTWHH. The substrate site is built by glutamate 225 and arginine 245. One copy of the BNR 3 repeat lies at 254–265; sequence ALSTDHGEGFQR. A disordered region spans residues 294–318; sequence RCQDSSSKDAPTIQQSSPGSSLRLE. Over residues 301–313 the composition is skewed to polar residues; it reads KDAPTIQQSSPGS. Serine 313 is subject to Phosphoserine. Arginine 340 is a binding site for substrate. The Nucleophile role is filled by tyrosine 370. Glutamate 387 is a catalytic residue.

This sequence belongs to the glycosyl hydrolase 33 family. In terms of assembly, interacts with CAV1; this interaction enhances NEU3 sialidase activity within caveola. Interacts with EGFR; this interaction mediates desialylation of EGFR and enhances downstream signaling. Palmitoylated; may regulate intracellular trafficking and anchorage to plasma membrane and endomembranes. In terms of tissue distribution, highly expressed in skeletal muscle, testis, adrenal gland and thymus, followed by pancreas, liver, heart and thymus. Weakly expressed in kidney, placenta, brain and lung.

It is found in the cell membrane. The protein localises to the membrane. The protein resides in the caveola. It localises to the early endosome membrane. Its subcellular location is the recycling endosome membrane. It is found in the lysosome membrane. It carries out the reaction Hydrolysis of alpha-(2-&gt;3)-, alpha-(2-&gt;6)-, alpha-(2-&gt;8)- glycosidic linkages of terminal sialic acid residues in oligosaccharides, glycoproteins, glycolipids, colominic acid and synthetic substrates.. The enzyme catalyses a ganglioside GD1a + H2O = a ganglioside GM1 + N-acetylneuraminate. It catalyses the reaction a ganglioside GD1a (d18:1(4E)) + H2O = a ganglioside GM1 (d18:1(4E)) + N-acetylneuraminate. The catalysed reaction is a ganglioside GD1b + H2O = a ganglioside GM1 + N-acetylneuraminate. It carries out the reaction a ganglioside GD1b (d18:1(4E)) + H2O = a ganglioside GM1 (d18:1(4E)) + N-acetylneuraminate. The enzyme catalyses a ganglioside GD3 + H2O = a ganglioside GM3 + N-acetylneuraminate. It catalyses the reaction a ganglioside GD3 (d18:1(4E)) + H2O = a ganglioside GM3 (d18:1(4E)) + N-acetylneuraminate. The catalysed reaction is a ganglioside GM3 + H2O = a beta-D-galactosyl-(1-&gt;4)-beta-D-glucosyl-(1&lt;-&gt;1)-ceramide + N-acetylneuraminate. It carries out the reaction a ganglioside GM1 + H2O = a ganglioside GA1 + N-acetylneuraminate. The enzyme catalyses a ganglioside GM1 (d18:1(4E)) + H2O = a ganglioside GA1 (d18:1(4E)) + N-acetylneuraminate. It catalyses the reaction a ganglioside GM2 (d18:1(4E)) + H2O = a ganglioside GA2 (d18:1(4E)) + N-acetylneuraminate. The catalysed reaction is a ganglioside GM3 (d18:1(4E)) + H2O = a beta-D-Gal-(1-&gt;4)-beta-D-Glc-(1&lt;-&gt;1)-Cer(d18:1(4E)) + N-acetylneuraminate. It carries out the reaction a ganglioside GT1b + H2O = a ganglioside GD1b + N-acetylneuraminate. Its function is as follows. Exo-alpha-sialidase that catalyzes the hydrolytic cleavage of the terminal sialic acid (N-acetylneuraminic acid, Neu5Ac) of a glycan moiety in the catabolism of glycolipids, glycoproteins and oligosacharides. Displays high catalytic efficiency for gangliosides including alpha-(2-&gt;3)-sialylated GD1a and GM3 and alpha-(2-&gt;8)-sialylated GD3. Plays a role in the regulation of transmembrane signaling through the modulation of ganglioside content of the lipid bilayer and by direct interaction with signaling receptors, such as EGFR. Desialylates EGFR and activates downstream signaling in proliferating cells. Contributes to clathrin-mediated endocytosis by regulating sorting of endocytosed receptors to early and recycling endosomes. This Homo sapiens (Human) protein is Sialidase-3 (NEU3).